A 346-amino-acid polypeptide reads, in one-letter code: LRP2-binding protein (346 aa).

One copy of the TPR repeat lies at 58–91 (AMAYFLRGQLYFEEGWYEEALAQFEEIQEKDHQA). Sel1-like repeat units follow at residues 92–124 (IYQL…DSSC), 132–167 (FAAA…DNGN), 172–205 (VKAQ…GNGS), 206–241 (LESQ…ERGN), 242–276 (VYAQ…EVHD), and 296–331 (AMAA…RLNP).

In terms of assembly, interacts with LRP2.

The protein resides in the cytoplasm. Functionally, may act as an adapter that regulates LRP2 function. In Mus musculus (Mouse), this protein is LRP2-binding protein (Lrp2bp).